We begin with the raw amino-acid sequence, 388 residues long: Succinate--CoA ligase [ADP-forming] subunit beta (388 aa).

Residues 9–244 (KEILRKFGVA…LDEEDPAEIE (236 aa)) enclose the ATP-grasp domain. ATP contacts are provided by residues Lys-46, 53–55 (GRG), Glu-99, Ala-102, and Glu-107. Mg(2+)-binding residues include Asn-199 and Asp-213. Substrate-binding positions include Asn-264 and 321–323 (GIM).

It belongs to the succinate/malate CoA ligase beta subunit family. Heterotetramer of two alpha and two beta subunits. Requires Mg(2+) as cofactor.

The enzyme catalyses succinate + ATP + CoA = succinyl-CoA + ADP + phosphate. It catalyses the reaction GTP + succinate + CoA = succinyl-CoA + GDP + phosphate. The protein operates within carbohydrate metabolism; tricarboxylic acid cycle; succinate from succinyl-CoA (ligase route): step 1/1. Functionally, succinyl-CoA synthetase functions in the citric acid cycle (TCA), coupling the hydrolysis of succinyl-CoA to the synthesis of either ATP or GTP and thus represents the only step of substrate-level phosphorylation in the TCA. The beta subunit provides nucleotide specificity of the enzyme and binds the substrate succinate, while the binding sites for coenzyme A and phosphate are found in the alpha subunit. The chain is Succinate--CoA ligase [ADP-forming] subunit beta from Burkholderia ambifaria (strain MC40-6).